Reading from the N-terminus, the 1976-residue chain is DNA-directed RNA polymerase V subunit 1 (1976 aa).

The Zn(2+) site is built by C57, C60, C68, H71, C98, and C101. Residues D449, D451, and D453 each coordinate Mg(2+). A bridging helix region spans residues 751–763 (PYEEMAHSIAARE). Residues 1215 to 1216 (WG) form repeat 1. The tract at residues 1215–1693 (WGKRVDVGTG…AKKFPSSGGW (479 aa)) is 18 X 2 AA repeats of [WG]-[GW] repeats. Disordered stretches follow at residues 1272–1291 (EEEM…LGEP), 1298–1718 (DFQN…EDNL), and 1847–1976 (FTKP…QTQT). Basic and acidic residues-rich tracts occupy residues 1281-1291 (SPERDSALGEP) and 1298-1307 (DFQNLHDEGK). The stretch at 1329 to 1330 (WG) is repeat 2. Residues 1332 to 1348 (SKSTGGEANPESNWEKT) show a composition bias toward polar residues. Positions 1349–1371 (TNVEKEDAWSSWNTRKDAQESSK) are enriched in basic and acidic residues. Repeat copies occupy residues 1378-1379 (WG), 1415-1416 (WG), 1430-1431 (WG), 1439-1440 (WG), 1447-1448 (WG), 1464-1465 (WG), 1498-1499 (WG), 1528-1529 (WG), 1545-1546 (WG), 1562-1563 (WG), 1596-1597 (WG), 1604-1605 (WG), 1621-1622 (WG), 1638-1639 (WG), and 1641-1642 (WG). Positions 1415 to 1430 (WGHKSVSDKSWDKKNW) are enriched in basic and acidic residues. Residues 1491–1501 (TESNGATWGSS) show a composition bias toward polar residues. Residues 1648 to 1678 (AEDKDTNEDDRNPWVSLKETKSREKDDKERS) are compositionally biased toward basic and acidic residues. 2 tandem repeats follow at residues 1680 to 1681 (WG) and 1692 to 1693 (GW). Positions 1869 to 1878 (EQSQPPNQSI) are enriched in polar residues. Low complexity predominate over residues 1886-1976 (QTQTQSQSPS…SSQSPSQTQT (91 aa)).

Belongs to the RNA polymerase beta' chain family. Component of the RNA polymerase V complex. Interacts with NRPD4, NRPD2A, and (via C-terminus) with AGO4. Interacts with SUVH2. In terms of tissue distribution, mostly expressed in flowers, and, to a lower extent, in leaves. Present in sperm cells.

Its subcellular location is the nucleus. It localises to the nucleolus. It carries out the reaction RNA(n) + a ribonucleoside 5'-triphosphate = RNA(n+1) + diphosphate. In terms of biological role, DNA-dependent RNA polymerase catalyzes the transcription of DNA into RNA using the four ribonucleoside triphosphates as substrates. Largest and catalytic component of RNA polymerase V involved in RNA-directed DNA methylation-dependent (RdDM) silencing of endogenous repeated sequences, including transposable elements. Also required for full erasure of methylation when the RNA trigger is withdrawn. Seems also involved in the synthesis of short-interfering RNAs (siRNA). Essential component of a self-reinforcing loop coupling de novo DNA methylation to siRNA production. Involved in the maintenance of post-transcriptional RNA silencing. This is DNA-directed RNA polymerase V subunit 1 (NRPE1) from Arabidopsis thaliana (Mouse-ear cress).